A 456-amino-acid chain; its full sequence is Bifunctional protein GlmU (456 aa).

The pyrophosphorylase stretch occupies residues 1 to 229; sequence MSSHAMSVVI…LSEVEGVNNR (229 aa). UDP-N-acetyl-alpha-D-glucosamine-binding positions include 11 to 14, K25, Q76, 81 to 82, 103 to 105, G140, E154, N169, and N227; these read LAAG, GT, and YGD. D105 provides a ligand contact to Mg(2+). N227 is a Mg(2+) binding site. A linker region spans residues 230-250; that stretch reads LQLARLEHVYQAEQAEKLLLA. The tract at residues 251 to 456 is N-acetyltransferase; sequence GVMLRDPARF…QGWRRPVKKK (206 aa). 2 residues coordinate UDP-N-acetyl-alpha-D-glucosamine: R333 and K351. The active-site Proton acceptor is H363. UDP-N-acetyl-alpha-D-glucosamine is bound by residues Y366 and N377. Acetyl-CoA is bound by residues A380, 386–387, S405, A423, and R440; that span reads NY.

The protein in the N-terminal section; belongs to the N-acetylglucosamine-1-phosphate uridyltransferase family. It in the C-terminal section; belongs to the transferase hexapeptide repeat family. Homotrimer. It depends on Mg(2+) as a cofactor.

It is found in the cytoplasm. The catalysed reaction is alpha-D-glucosamine 1-phosphate + acetyl-CoA = N-acetyl-alpha-D-glucosamine 1-phosphate + CoA + H(+). It carries out the reaction N-acetyl-alpha-D-glucosamine 1-phosphate + UTP + H(+) = UDP-N-acetyl-alpha-D-glucosamine + diphosphate. It participates in nucleotide-sugar biosynthesis; UDP-N-acetyl-alpha-D-glucosamine biosynthesis; N-acetyl-alpha-D-glucosamine 1-phosphate from alpha-D-glucosamine 6-phosphate (route II): step 2/2. The protein operates within nucleotide-sugar biosynthesis; UDP-N-acetyl-alpha-D-glucosamine biosynthesis; UDP-N-acetyl-alpha-D-glucosamine from N-acetyl-alpha-D-glucosamine 1-phosphate: step 1/1. Its pathway is bacterial outer membrane biogenesis; LPS lipid A biosynthesis. In terms of biological role, catalyzes the last two sequential reactions in the de novo biosynthetic pathway for UDP-N-acetylglucosamine (UDP-GlcNAc). The C-terminal domain catalyzes the transfer of acetyl group from acetyl coenzyme A to glucosamine-1-phosphate (GlcN-1-P) to produce N-acetylglucosamine-1-phosphate (GlcNAc-1-P), which is converted into UDP-GlcNAc by the transfer of uridine 5-monophosphate (from uridine 5-triphosphate), a reaction catalyzed by the N-terminal domain. In Cronobacter sakazakii (strain ATCC BAA-894) (Enterobacter sakazakii), this protein is Bifunctional protein GlmU.